Consider the following 544-residue polypeptide: Cytochrome P450 monooxygenase notG' (544 aa).

The signal sequence occupies residues 1 to 22 (MELPFSAMSLLYLLVGIAGVIS). 2 helical membrane passes run 42–62 (WYTL…GLPL) and 66–86 (AKAT…SLLL). Residues Asn-226 and Asn-404 are each glycosylated (N-linked (GlcNAc...) asparagine). Cys-487 contributes to the heme binding site.

This sequence belongs to the cytochrome P450 family. Heme serves as cofactor.

It localises to the membrane. It functions in the pathway alkaloid biosynthesis. Cytochrome P450 monooxygenase; part of the gene cluster that mediates the biosynthesis of notoamide, a fungal indole alkaloid that belongs to a family of natural products containing a characteristic bicyclo[2.2.2]diazaoctane core. The first step of notoamide biosynthesis involves coupling of L-proline and L-tryptophan by the bimodular NRPS notE', to produce cyclo-L-tryptophan-L-proline called brevianamide F. The reverse prenyltransferase notF' then acts as a deoxybrevianamide E synthase and converts brevianamide F to deoxybrevianamide E via reverse prenylation at C-2 of the indole ring leading to the bicyclo[2.2.2]diazaoctane core. Deoxybrevianamide E is further hydroxylated at C-6 of the indole ring, likely catalyzed by the cytochrome P450 monooxygenase notG', to yield 6-hydroxy-deoxybrevianamide E. 6-hydroxy-deoxybrevianamide E is a specific substrate of the prenyltransferase notC' for normal prenylation at C-7 to produce 6-hydroxy-7-prenyl-deoxybrevianamide, also called notoamide S. As the proposed pivotal branching point in notoamide biosynthesis, notoamide S can be diverted to notoamide E through an oxidative pyran ring closure putatively catalyzed by either notH' cytochrome P450 monooxygenase or the notD' FAD-linked oxidoreductase. This step would be followed by an indole 2,3-epoxidation-initiated pinacol-like rearrangement catalyzed by the notB' FAD-dependent monooxygenase leading to the formation of notoamide C and notoamide D. On the other hand notoamide S is converted to notoamide T by notH' (or notD'), a bifunctional oxidase that also functions as the intramolecular Diels-Alderase responsible for generation of (-)-notoamide T. To generate antipodal (+)-notoaminide T, notH (or notD) in Aspergillus strain MF297-2 is expected to catalyze a Diels-Alder reaction leading to the opposite stereochemistry. The remaining oxidoreductase notD' (or notH') likely catalyzes the oxidative pyran ring formation to yield (-)-stephacidin A. The FAD-dependent monooxygenase notI' is highly similar to notB' and is predicted to catalyze a similar conversion from (-)-stephacidin A to (+)-notoamide B via the 2,3-epoxidation of (-)-stephacidin A followed by a pinacol-type rearrangement. Finally, it remains unclear which enzyme could be responsible for the final hydroxylation steps leading to notoamide A and sclerotiamide. The sequence is that of Cytochrome P450 monooxygenase notG' from Aspergillus versicolor.